The primary structure comprises 519 residues: Cytosol aminopeptidase (519 aa).

Position 42 is a phosphoserine (serine 42). Residue lysine 45 is modified to N6-succinyllysine. A Phosphoserine modification is found at serine 54. An N6-succinyllysine mark is found at lysine 61 and lysine 103. Residues serine 180 and serine 194 each carry the phosphoserine modification. 3 residues coordinate Zn(2+): leucine 202, methionine 203, and threonine 205. Lysine 221 is modified (N6-acetyllysine; alternate). Lysine 221 carries the post-translational modification N6-succinyllysine; alternate. The residue at position 238 (serine 238) is a Phosphoserine. Zn(2+) contacts are provided by lysine 282 and aspartate 287. Lysine 282, aspartate 287, serine 292, and lysine 294 together coordinate substrate. Position 287 (aspartate 287) interacts with Mg(2+). The active site involves lysine 294. Arginine 303, aspartate 305, aspartate 364, and glutamate 366 together coordinate Zn(2+). Substrate-binding residues include aspartate 305 and aspartate 364. Mg(2+)-binding residues include aspartate 364 and glutamate 366. The active site involves arginine 368. N6-acetyllysine; alternate is present on lysine 455. An N6-succinyllysine; alternate modification is found at lysine 455. At lysine 476 the chain carries N6-succinyllysine. N6-acetyllysine; alternate is present on lysine 489. Lysine 489 carries the post-translational modification N6-succinyllysine; alternate.

The protein belongs to the peptidase M17 family. Homohexamer. Zn(2+) is required as a cofactor. It depends on Mn(2+) as a cofactor.

Its subcellular location is the cytoplasm. It catalyses the reaction Release of an N-terminal amino acid, Xaa-|-Yaa-, in which Xaa is preferably Leu, but may be other amino acids including Pro although not Arg or Lys, and Yaa may be Pro. Amino acid amides and methyl esters are also readily hydrolyzed, but rates on arylamides are exceedingly low.. It carries out the reaction an S-substituted L-cysteinylglycine + H2O = an S-substituted L-cysteine + glycine. The catalysed reaction is L-cysteinylglycine + H2O = L-cysteine + glycine. The enzyme catalyses S-benzyl-L-cysteinylglycine + H2O = S-benzyl-L-cysteine + glycine. It catalyses the reaction Release of N-terminal proline from a peptide.. Its function is as follows. Cytosolic metallopeptidase that catalyzes the removal of unsubstituted N-terminal hydrophobic amino acids from various peptides. The presence of Zn(2+) ions is essential for the peptidase activity, and the association with other cofactors can modulate the substrate spectificity of the enzyme. For instance, in the presence of Mn(2+), it displays a specific Cys-Gly hydrolyzing activity of Cys-Gly-S-conjugates. Involved in the metabolism of glutathione and in the degradation of glutathione S-conjugates, which may play a role in the control of the cell redox status. The chain is Cytosol aminopeptidase from Sus scrofa (Pig).